The primary structure comprises 447 residues: UDP-glycosyltransferase 76E3 (447 aa).

Residues Ser269, 328–330 (APQ), 345–353 (HCGWNSTLE), and 367–370 (QGEQ) each bind UDP-alpha-D-glucose.

Belongs to the UDP-glycosyltransferase family.

The chain is UDP-glycosyltransferase 76E3 (UGT76E3) from Arabidopsis thaliana (Mouse-ear cress).